A 249-amino-acid polypeptide reads, in one-letter code: 3-deoxy-manno-octulosonate cytidylyltransferase (249 aa).

Belongs to the KdsB family.

The protein resides in the cytoplasm. The enzyme catalyses 3-deoxy-alpha-D-manno-oct-2-ulosonate + CTP = CMP-3-deoxy-beta-D-manno-octulosonate + diphosphate. It participates in nucleotide-sugar biosynthesis; CMP-3-deoxy-D-manno-octulosonate biosynthesis; CMP-3-deoxy-D-manno-octulosonate from 3-deoxy-D-manno-octulosonate and CTP: step 1/1. Its pathway is bacterial outer membrane biogenesis; lipopolysaccharide biosynthesis. In terms of biological role, activates KDO (a required 8-carbon sugar) for incorporation into bacterial lipopolysaccharide in Gram-negative bacteria. This Aliivibrio fischeri (strain ATCC 700601 / ES114) (Vibrio fischeri) protein is 3-deoxy-manno-octulosonate cytidylyltransferase.